The chain runs to 511 residues: Sodium/hydrogen exchanger 9B1 (511 aa).

The span at 1–10 shows a compositional bias: basic and acidic residues; sequence MHTTESKDEH. The tract at residues 1-41 is disordered; sequence MHTTESKDEHLEDENFQTSTTPQSLIDPNSTAHEETKTVIS. Polar residues predominate over residues 16 to 31; sequence FQTSTTPQSLIDPNST. The next 13 helical transmembrane spans lie at 67–87, 95–115, 116–136, 152–172, 187–207, 215–235, 260–280, 284–304, 337–357, 368–388, 398–418, 431–451, and 472–492; these read IITN…VLGS, LFGL…LQLI, RIPL…GFTI, WSSI…GLGL, LAVG…HFIM, FLLG…SMMV, VLAI…GGIV, IASI…GFFV, IGLH…AGTK, IITN…GAEV, IGIF…VTYI, IFIA…GPLV, and VAFL…GILG.

This sequence belongs to the monovalent cation:proton antiporter 1 (CPA1) transporter (TC 2.A.36) family.

It localises to the cell projection. It is found in the cilium. The protein resides in the flagellum membrane. Functionally, sperm-specific Na(+)/H(+) exchanger involved in intracellular pH regulation of spermatozoa. Involved in sperm motility and fertility. The protein is Sodium/hydrogen exchanger 9B1 (SLC9B1) of Macaca fascicularis (Crab-eating macaque).